A 302-amino-acid chain; its full sequence is Haloalkane dehalogenase (302 aa).

The 103-residue stretch at 48–150 (PVLLMHGEPS…AGLVIANTGL (103 aa)) folds into the AB hydrolase-1 domain. D123 (nucleophile) is an active-site residue. D249 functions as the Proton donor in the catalytic mechanism. H278 functions as the Proton acceptor in the catalytic mechanism.

Belongs to the haloalkane dehalogenase family. Type 1 subfamily. Monomer.

It catalyses the reaction 1-haloalkane + H2O = a halide anion + a primary alcohol + H(+). In terms of biological role, catalyzes hydrolytic cleavage of carbon-halogen bonds in halogenated aliphatic compounds, leading to the formation of the corresponding primary alcohols, halide ions and protons. This Caulobacter sp. (strain K31) protein is Haloalkane dehalogenase.